We begin with the raw amino-acid sequence, 127 residues long: Large ribosomal subunit protein bL17 (127 aa).

The protein belongs to the bacterial ribosomal protein bL17 family. As to quaternary structure, part of the 50S ribosomal subunit. Contacts protein L32.

The polypeptide is Large ribosomal subunit protein bL17 (Fervidobacterium nodosum (strain ATCC 35602 / DSM 5306 / Rt17-B1)).